We begin with the raw amino-acid sequence, 242 residues long: EF-hand domain-containing protein D2 (242 aa).

The segment at 1 to 53 (MATDELASKLSRRLQMEGEGGGEAPEQPGLNGAAAAAAAAGAPDETAEALGSA) is disordered. The residue at position 2 (Ala-2) is an N-acetylalanine. The residue at position 11 (Ser-11) is a Phosphoserine. Over residues 32-42 (GAAAAAAAAGA) the composition is skewed to low complexity. Ser-76 and Ser-78 each carry phosphoserine. Tyr-85 is subject to Phosphotyrosine. EF-hand domains are found at residues 94–129 (KQIK…LGAP) and 130–165 (QTHL…AAAG). The Ca(2+) site is built by Asp-107, Asp-111, Glu-118, Asp-143, Asp-145, Asp-147, Lys-149, and Glu-154. At Lys-235 the chain carries N6-acetyllysine.

As to quaternary structure, interacts with CASP9; with inactive form.

It localises to the membrane raft. Its function is as follows. May regulate B-cell receptor (BCR)-induced immature and primary B-cell apoptosis. Plays a role as negative regulator of the canonical NF-kappa-B-activating branch. Controls spontaneous apoptosis through the regulation of BCL2L1 abundance. The sequence is that of EF-hand domain-containing protein D2 (EFHD2) from Bos taurus (Bovine).